Consider the following 211-residue polypeptide: Endonuclease Htp3 (211 aa).

The first 20 residues, 1 to 20 (MLEVPVWIPILAFAVGLGLG), serve as a signal peptide directing secretion. A RxLR motif is present at residues 48–51 (RTLR). One can recognise a TNase-like domain in the interval 48-198 (RTLRGKVVSV…REKRVNIWSL (151 aa)). Residue aspartate 77 coordinates Ca(2+). Arginine 90 is a catalytic residue. Position 95 (aspartate 95) interacts with Ca(2+). Active-site residues include glutamate 98 and arginine 138. Asparagine 153 carries N-linked (GlcNAc...) asparagine glycosylation. A binding to the host cell surface region spans residues 200-211 (KRETPAQYKARK).

This sequence in the N-terminal section; belongs to the RxLR effector family. The protein in the C-terminal section; belongs to the LCL3 family. In terms of assembly, interacts with the host cell surface endoplasmin gp96, in order to get translocated into to host cell. Interacts with the effector Htp1, in order to get released from vesicles into the host cytosol.

The protein resides in the secreted. Its subcellular location is the host cytoplasm. It is found in the host cytosol. With respect to regulation, the nuclease activity shows a general salt dependency with a clear reduction by magnesium and sulfate ions. Effector involved in the disease saprolegniosis in salmonids and other freshwater fish, resulting in considerable economic losses in aquaculture. Within the host fish cells, Htp3 is released from vesicles into host cytosol where it degrades nucleic acids. This Saprolegnia parasitica (strain CBS 223.65) protein is Endonuclease Htp3 (HTP3).